The chain runs to 178 residues: PEST proteolytic signal-containing nuclear protein (178 aa).

A compositionally biased stretch (basic and acidic residues) spans 1–15 (MADGKAGEEKPEKSQ). Residues 1–84 (MADGKAGEEK…IGSQTTKKAS (84 aa)) form a disordered region. At A2 the chain carries N-acetylalanine. Residues 37 to 47 (SSSNGGESSSR) are compositionally biased toward low complexity. S53 carries the post-translational modification Phosphoserine. K64 carries the post-translational modification N6-acetyllysine. Phosphoserine occurs at positions 77, 87, and 119. A disordered region spans residues 134 to 178 (NIGRDTPTSAGPNSFNKGKHGFSDNQKLWERNIKSHLGNVHDQDN). At T139 the chain carries Phosphothreonine. Residues 139–149 (TPTSAGPNSFN) show a composition bias toward polar residues. S147 bears the Phosphoserine mark. 2 positions are modified to N6-acetyllysine: K150 and K152. Basic and acidic residues predominate over residues 160-178 (KLWERNIKSHLGNVHDQDN).

In terms of assembly, interacts with UHRF2/NIRF. Post-translationally, ubiquitinated; mediated by UHRF2 and leading to its subsequent proteasomal degradation. N-terminally acetylated in a HYPK-dependent manner by the NatA acetyltransferase complex which is composed of NAA10 and NAA15.

Its subcellular location is the nucleus. Functionally, may be involved in cell cycle regulation. The protein is PEST proteolytic signal-containing nuclear protein (PCNP) of Pongo abelii (Sumatran orangutan).